A 270-amino-acid polypeptide reads, in one-letter code: Tryptophan synthase alpha chain (270 aa).

Active-site proton acceptor residues include Glu-49 and Asp-60.

This sequence belongs to the TrpA family. Tetramer of two alpha and two beta chains.

It carries out the reaction (1S,2R)-1-C-(indol-3-yl)glycerol 3-phosphate + L-serine = D-glyceraldehyde 3-phosphate + L-tryptophan + H2O. It functions in the pathway amino-acid biosynthesis; L-tryptophan biosynthesis; L-tryptophan from chorismate: step 5/5. Functionally, the alpha subunit is responsible for the aldol cleavage of indoleglycerol phosphate to indole and glyceraldehyde 3-phosphate. This chain is Tryptophan synthase alpha chain, found in Pseudomonas fluorescens (strain Pf0-1).